The sequence spans 370 residues: NADH-quinone oxidoreductase subunit D (370 aa).

This sequence belongs to the complex I 49 kDa subunit family. NDH-1 is composed of 14 different subunits. Subunits NuoB, C, D, E, F, and G constitute the peripheral sector of the complex.

The protein localises to the cell membrane. The catalysed reaction is a quinone + NADH + 5 H(+)(in) = a quinol + NAD(+) + 4 H(+)(out). Its function is as follows. NDH-1 shuttles electrons from NADH, via FMN and iron-sulfur (Fe-S) centers, to quinones in the respiratory chain. The immediate electron acceptor for the enzyme in this species is believed to be a menaquinone. Couples the redox reaction to proton translocation (for every two electrons transferred, four hydrogen ions are translocated across the cytoplasmic membrane), and thus conserves the redox energy in a proton gradient. The protein is NADH-quinone oxidoreductase subunit D of Desulfitobacterium hafniense (strain Y51).